Here is a 397-residue protein sequence, read N- to C-terminus: Elongation factor Tu (397 aa).

The tr-type G domain maps to 10–206 (KPHVNIGTIG…AIDSYIPTPE (197 aa)). The interval 19-26 (GHVDHGKT) is G1. Residue 19 to 26 (GHVDHGKT) participates in GTP binding. Threonine 26 contributes to the Mg(2+) binding site. Residues 60–64 (GITIN) are G2. The interval 81–84 (DCPG) is G3. GTP contacts are provided by residues 81 to 85 (DCPGH) and 136 to 139 (NKAD). The G4 stretch occupies residues 136–139 (NKAD). Residues 174–176 (SAL) form a G5 region.

Belongs to the TRAFAC class translation factor GTPase superfamily. Classic translation factor GTPase family. EF-Tu/EF-1A subfamily. As to quaternary structure, monomer.

The protein localises to the cytoplasm. It carries out the reaction GTP + H2O = GDP + phosphate + H(+). Its function is as follows. GTP hydrolase that promotes the GTP-dependent binding of aminoacyl-tRNA to the A-site of ribosomes during protein biosynthesis. This is Elongation factor Tu from Clostridium botulinum (strain ATCC 19397 / Type A).